A 190-amino-acid chain; its full sequence is Potassium-transporting ATPase KdpC subunit (190 aa).

Residues 6–26 (PAVFLVLLLTLITGLLYPLLT) form a helical membrane-spanning segment. The segment at 67–88 (GRPSATSDRPYNPLASSGSNLA) is disordered. Residues 69–88 (PSATSDRPYNPLASSGSNLA) show a composition bias toward polar residues.

This sequence belongs to the KdpC family. The system is composed of three essential subunits: KdpA, KdpB and KdpC.

It localises to the cell inner membrane. Functionally, part of the high-affinity ATP-driven potassium transport (or Kdp) system, which catalyzes the hydrolysis of ATP coupled with the electrogenic transport of potassium into the cytoplasm. This subunit acts as a catalytic chaperone that increases the ATP-binding affinity of the ATP-hydrolyzing subunit KdpB by the formation of a transient KdpB/KdpC/ATP ternary complex. This chain is Potassium-transporting ATPase KdpC subunit, found in Erwinia tasmaniensis (strain DSM 17950 / CFBP 7177 / CIP 109463 / NCPPB 4357 / Et1/99).